Consider the following 495-residue polypeptide: Fusicoccadiene 8-ol C-16 hydroxylase (495 aa).

The chain crosses the membrane as a helical span at residues 12–32; sequence VLLALIVWIGTTIIYNIYFHP. N-linked (GlcNAc...) asparagine glycosylation is found at Asn249 and Asn317. Cys439 is a binding site for heme.

It belongs to the cytochrome P450 family. The cofactor is heme.

It localises to the membrane. Its pathway is mycotoxin biosynthesis. In terms of biological role, cytochrome P450 monooxygenase; part of the gene cluster that mediates the biosynthesis of the diterpene glucoside brassicicene C. In the first step of the brassicicene C biosynthesis, the bifunctional diterpene synthase bsc8 that possesses both prenyl transferase and terpene cyclase activity, converts isopentenyl diphosphate and dimethylallyl diphosphate into geranylgeranyl diphosphate (GGDP) that is further converted into fusicocca-2,10(14)-diene, the first precursor for brassicicene C. Fusicocca-2,10(14)-diene is then substrate of cytochrome P450 monooxygenase bsc1 for hydroxylation at the C-8 position. Oxidation at C-16 position to aldehyde is then catalyzed by the cytochrome P450 monooyxygenase bsc7, yielding fusicocca-2,10(14)-diene-8-beta,16-diol. Follows the isomerization of the double bond and reduction of aldehyde to alcohol catalyzed by the short-chain dehydrogenase/reductase bsc3 to yield the diol compound fusicocca-1,10(14)-diene-8 beta,16-diol. The next step is the oxidation at the C-3 position of fusicocca-2,10(14)-diene-8-beta,16-diol catalyzed by the alpha-ketoglutarate dependent dioxygenase bsc9, to produce a triol compound. Methylation of the hydroxy group at position 16 is performed by the methyltransferase bsc6. 16-O-methylation is followed by oxidation at the C-13 position to ketone and an alkyl shift of the methyl group leads to brassicicene C. Although the probable acetyltransferase bsc4 is included in the gene cluster, no acetylation reactions are necessary for brassicicene C biosynthesis. However, the fact that brassicicene E, which is a structurally related compound having an acetoxy group at position 12, was previously isolated from another strain of A.brassicicola suggests that the ATCC 96836 strain might also produce a small amount of brassicicene E. The protein is Fusicoccadiene 8-ol C-16 hydroxylase of Alternaria brassicicola (Dark leaf spot agent).